The sequence spans 237 residues: Probable transcriptional regulatory protein EAT1b_0153 (237 aa).

Belongs to the TACO1 family. YeeN subfamily.

The protein localises to the cytoplasm. This is Probable transcriptional regulatory protein EAT1b_0153 from Exiguobacterium sp. (strain ATCC BAA-1283 / AT1b).